Consider the following 117-residue polypeptide: Large ribosomal subunit protein bL20c (117 aa).

It belongs to the bacterial ribosomal protein bL20 family.

It is found in the plastid. It localises to the chloroplast. Binds directly to 23S ribosomal RNA and is necessary for the in vitro assembly process of the 50S ribosomal subunit. It is not involved in the protein synthesizing functions of that subunit. The chain is Large ribosomal subunit protein bL20c from Acorus calamus (Sweet flag).